Reading from the N-terminus, the 1033-residue chain is SIT4-associating protein SAP190 (1033 aa).

Disordered stretches follow at residues 32 to 82 (DQDD…TTES), 147 to 213 (PEII…QVET), 768 to 813 (FGND…HDSG), and 828 to 1033 (ENEE…KEAF). The segment covering 158 to 170 (ILIERDRKDKKED) has biased composition (basic and acidic residues). Over residues 171–182 (AEEGGDSEETTN) the composition is skewed to acidic residues. Over residues 183–195 (DSDHDSGDERSVD) the composition is skewed to basic and acidic residues. Serine 774 is subject to Phosphoserine. 2 stretches are compositionally biased toward acidic residues: residues 784-793 (SEDIIGDTEG) and 828-838 (ENEEDYAEYSD). Phosphoserine occurs at positions 857, 862, and 892. The segment covering 858 to 879 (DDGKSKSAESEFTDKISEHRDG) has biased composition (basic and acidic residues). Positions 909–924 (SRSQPSDPKLQDQNIF) are enriched in polar residues. A compositionally biased stretch (acidic residues) spans 932–944 (GVGDDDDYMDPND). A Phosphothreonine modification is found at threonine 990. Residue serine 991 is modified to Phosphoserine. The segment covering 1000–1018 (ISSDEEDSEDEDEENDMGN) has biased composition (acidic residues).

This sequence belongs to the SAPS family. Associates with the SIT4 protein phosphatase catalytic subunit in a cell-cycle-dependent manner. Hyperphosphorylated in the absence of SIT4.

The protein resides in the cytoplasm. Functionally, positive regulator of protein phosphatase SIT4. Involved in the general amino acid control (GAAC) response regulated by TOR. Involved in the dephosphorylation of the elongator complex subunit IKI3. The chain is SIT4-associating protein SAP190 (SAP190) from Saccharomyces cerevisiae (strain Lalvin EC1118 / Prise de mousse) (Baker's yeast).